The sequence spans 306 residues: Pantothenate kinase (306 aa).

Residue 90-97 (GSVAVGKS) participates in ATP binding.

It belongs to the prokaryotic pantothenate kinase family.

The protein localises to the cytoplasm. It carries out the reaction (R)-pantothenate + ATP = (R)-4'-phosphopantothenate + ADP + H(+). It participates in cofactor biosynthesis; coenzyme A biosynthesis; CoA from (R)-pantothenate: step 1/5. In Listeria welshimeri serovar 6b (strain ATCC 35897 / DSM 20650 / CCUG 15529 / CIP 8149 / NCTC 11857 / SLCC 5334 / V8), this protein is Pantothenate kinase.